Consider the following 373-residue polypeptide: ATP-dependent 6-phosphofructokinase (373 aa).

Residues Gly12, 74-75, and 110-113 contribute to the ATP site; these read RD and GGGT. Substrate is bound by residues 133–135, Arg170, 177–179, Glu230, Arg291, and 297–300; these read TID, MGH, and YVQR. Asp135 functions as the Proton acceptor in the catalytic mechanism.

The protein belongs to the phosphofructokinase type A (PFKA) family. Mixed-substrate PFK group III subfamily. As to quaternary structure, homodimer or homotetramer. It depends on Mg(2+) as a cofactor.

Its subcellular location is the cytoplasm. It catalyses the reaction beta-D-fructose 6-phosphate + ATP = beta-D-fructose 1,6-bisphosphate + ADP + H(+). It participates in carbohydrate degradation; glycolysis; D-glyceraldehyde 3-phosphate and glycerone phosphate from D-glucose: step 3/4. Catalyzes the phosphorylation of D-fructose 6-phosphate to fructose 1,6-bisphosphate by ATP, the first committing step of glycolysis. In Propionibacterium freudenreichii subsp. shermanii (strain ATCC 9614 / DSM 4902 / CIP 103027 / NCIMB 8099 / CIRM-BIA1), this protein is ATP-dependent 6-phosphofructokinase.